Reading from the N-terminus, the 62-residue chain is Alpha-conotoxin-like S1.1 (62 aa).

The N-terminal stretch at 1 to 21 (MGMRMMFTVFLLVVLAITVVS) is a signal peptide. Residues 22-48 (FPLDRESDGANAEARTHDHEKHALDRN) constitute a propeptide that is removed on maturation. 2 disulfide bridges follow: C50-C56 and C51-C61. Cysteine amide is present on C61.

This sequence belongs to the conotoxin A superfamily. In terms of tissue distribution, expressed by the venom duct.

The protein localises to the secreted. In terms of biological role, alpha-conotoxins act on postsynaptic membranes, they bind to the nicotinic acetylcholine receptors (nAChR) and thus inhibit them. This is Alpha-conotoxin-like S1.1 from Conus striatus (Striated cone).